The chain runs to 315 residues: Heterodimeric geranylgeranyl pyrophosphate synthase small subunit 1, chloroplastic (315 aa).

2 residues coordinate Mg(2+): Asp-124 and Gly-130. Positions 228, 265, and 280 each coordinate dimethylallyl diphosphate.

Belongs to the FPP/GGPP synthase family. In terms of assembly, part of a heterodimeric geranyl(geranyl)diphosphate synthase. Mg(2+) serves as cofactor. Mainly expressed in trichomes, and, to a lower extent, in roots, leaves, flowers and stems.

It localises to the plastid. It is found in the chloroplast thylakoid membrane. The protein resides in the chloroplast. Functionally, heterodimeric geranyl(geranyl)-diphosphate (GPP) synthase small subunit. The small subunit alone is inactive in vitro while the large subunit GGPPS1 catalyzes mainly the production of geranygeranyl-diphosphate in vitro. Upon association of the two subunits, the product profile changes and the production of gerany-diphosphate is strongly increased. The chain is Heterodimeric geranylgeranyl pyrophosphate synthase small subunit 1, chloroplastic from Cannabis sativa (Hemp).